Consider the following 541-residue polypeptide: Peptide chain release factor 3 (541 aa).

The region spanning 14 to 283 (EARRNFAIIS…AFLDYALKPG (270 aa)) is the tr-type G domain. GTP-binding positions include 23 to 30 (SHPDAGKT), 91 to 95 (DTPGH), and 145 to 148 (NKLD).

The protein belongs to the TRAFAC class translation factor GTPase superfamily. Classic translation factor GTPase family. PrfC subfamily.

It localises to the cytoplasm. Increases the formation of ribosomal termination complexes and stimulates activities of RF-1 and RF-2. It binds guanine nucleotides and has strong preference for UGA stop codons. It may interact directly with the ribosome. The stimulation of RF-1 and RF-2 is significantly reduced by GTP and GDP, but not by GMP. This Acaryochloris marina (strain MBIC 11017) protein is Peptide chain release factor 3.